The sequence spans 508 residues: Mitochondrial distribution and morphology protein 10 (508 aa).

The interval 160-195 is disordered; it reads PAHPTSTRPTPPQTPPSHTRQPSEPSTPAPSPTPGN.

The protein belongs to the MDM10 family. Component of the ER-mitochondria encounter structure (ERMES) or MDM complex, composed of MMM1, MDM10, MDM12 and MDM34. Associates with the mitochondrial outer membrane sorting assembly machinery SAM(core) complex.

Its subcellular location is the mitochondrion outer membrane. Its function is as follows. Component of the ERMES/MDM complex, which serves as a molecular tether to connect the endoplasmic reticulum and mitochondria. Components of this complex are involved in the control of mitochondrial shape and protein biogenesis and may function in phospholipid exchange. MDM10 is involved in the late assembly steps of the general translocase of the mitochondrial outer membrane (TOM complex). Functions in the TOM40-specific route of the assembly of outer membrane beta-barrel proteins, including the association of TOM40 with the receptor TOM22 and small TOM proteins. Can associate with the SAM(core) complex as well as the MDM12-MMM1 complex, both involved in late steps of the major beta-barrel assembly pathway, that is responsible for biogenesis of all outer membrane beta-barrel proteins. May act as a switch that shuttles between both complexes and channels precursor proteins into the TOM40-specific pathway. Plays a role in mitochondrial morphology and in the inheritance of mitochondria. This Cryptococcus neoformans var. neoformans serotype D (strain JEC21 / ATCC MYA-565) (Filobasidiella neoformans) protein is Mitochondrial distribution and morphology protein 10.